The sequence spans 173 residues: Ribosome maturation factor RimM (173 aa).

Positions 98–170 constitute a PRC barrel domain; it reads EDEYYWCDLI…RMLITPLEGL (73 aa).

This sequence belongs to the RimM family. Binds ribosomal protein uS19.

It localises to the cytoplasm. In terms of biological role, an accessory protein needed during the final step in the assembly of 30S ribosomal subunit, possibly for assembly of the head region. Essential for efficient processing of 16S rRNA. May be needed both before and after RbfA during the maturation of 16S rRNA. It has affinity for free ribosomal 30S subunits but not for 70S ribosomes. The sequence is that of Ribosome maturation factor RimM from Pelobacter propionicus (strain DSM 2379 / NBRC 103807 / OttBd1).